We begin with the raw amino-acid sequence, 213 residues long: Chloramphenicol acetyltransferase 2 (213 aa).

Catalysis depends on His-189, which acts as the Proton acceptor.

Belongs to the chloramphenicol acetyltransferase family. In terms of assembly, homotrimer.

It catalyses the reaction chloramphenicol + acetyl-CoA = chloramphenicol 3-acetate + CoA. This enzyme is an effector of chloramphenicol resistance in bacteria. The sequence is that of Chloramphenicol acetyltransferase 2 (cmlA) from Escherichia coli.